The sequence spans 661 residues: UvrABC system protein B (661 aa).

One can recognise a Helicase ATP-binding domain in the interval 23-180 (EGLQKGYRIQ…THLARIGYER (158 aa)). 36–43 (GVTGSGKT) contributes to the ATP binding site. The Beta-hairpin signature appears at 89 to 112 (YYDYYQPEAYIPTRDLYIEKNADI). A Helicase C-terminal domain is found at 426 to 592 (QIDDLVNEIA…TIIKPLDEEI (167 aa)). Positions 620–655 (EEYIALLEEEMYKAASELRYEDAARLRDELFNIREK) constitute a UVR domain.

The protein belongs to the UvrB family. As to quaternary structure, forms a heterotetramer with UvrA during the search for lesions. Interacts with UvrC in an incision complex.

The protein resides in the cytoplasm. In terms of biological role, the UvrABC repair system catalyzes the recognition and processing of DNA lesions. A damage recognition complex composed of 2 UvrA and 2 UvrB subunits scans DNA for abnormalities. Upon binding of the UvrA(2)B(2) complex to a putative damaged site, the DNA wraps around one UvrB monomer. DNA wrap is dependent on ATP binding by UvrB and probably causes local melting of the DNA helix, facilitating insertion of UvrB beta-hairpin between the DNA strands. Then UvrB probes one DNA strand for the presence of a lesion. If a lesion is found the UvrA subunits dissociate and the UvrB-DNA preincision complex is formed. This complex is subsequently bound by UvrC and the second UvrB is released. If no lesion is found, the DNA wraps around the other UvrB subunit that will check the other stand for damage. The protein is UvrABC system protein B of Thermosipho africanus (strain TCF52B).